A 447-amino-acid polypeptide reads, in one-letter code: Divalent metal cation transporter MntH (447 aa).

The next 11 helical transmembrane spans lie at 26–48 (AGFW…GYMD), 65–85 (TLLS…AMSA), 108–128 (GFLL…AEII), 140–160 (IPLI…LLLM), 169–189 (AIVA…VLLS), 212–232 (MLYL…LYLG), 264–284 (LFLA…LFYG), 304–324 (IVGA…LLAS), 359–379 (VLSV…EAKI), 383–403 (LTFS…PLVI), and 426–446 (TATI…LGLI).

The protein belongs to the NRAMP family.

The protein localises to the cell membrane. In terms of biological role, h(+)-stimulated, divalent metal cation uptake system. The chain is Divalent metal cation transporter MntH from Pediococcus pentosaceus (strain ATCC 25745 / CCUG 21536 / LMG 10740 / 183-1w).